Here is a 103-residue protein sequence, read N- to C-terminus: Cytochrome c-552 (103 aa).

Positions 1 to 22 are cleaved as a signal peptide; the sequence is MKTAWLGTFAASALLVAGYAQA. Residues Cys-32, Cys-35, His-36, and Met-81 each contribute to the heme c site.

As to quaternary structure, monomer. Binds 1 heme c group covalently per subunit.

It localises to the periplasm. In terms of biological role, monoheme c-type cytochrome. Probable electron donor to membrane cytochrome oxidase and to periplasmic nitrite reductase. The chain is Cytochrome c-552 (cyt) from Nitrosomonas europaea (strain ATCC 19718 / CIP 103999 / KCTC 2705 / NBRC 14298).